A 221-amino-acid chain; its full sequence is Large ribosomal subunit protein uL3 (221 aa).

Belongs to the universal ribosomal protein uL3 family. Part of the 50S ribosomal subunit. Forms a cluster with proteins L14 and L19.

One of the primary rRNA binding proteins, it binds directly near the 3'-end of the 23S rRNA, where it nucleates assembly of the 50S subunit. This Chlamydia trachomatis serovar A (strain ATCC VR-571B / DSM 19440 / HAR-13) protein is Large ribosomal subunit protein uL3.